A 55-amino-acid chain; its full sequence is ATP synthase F(0) complex subunit 8 (55 aa).

A helical membrane pass occupies residues 7-29 (NPWFYIMLMSWLTFSLIIQPELL).

Belongs to the ATPase protein 8 family. As to quaternary structure, component of the ATP synthase complex composed at least of ATP5F1A/subunit alpha, ATP5F1B/subunit beta, ATP5MC1/subunit c (homooctomer), MT-ATP6/subunit a, MT-ATP8/subunit 8, ATP5ME/subunit e, ATP5MF/subunit f, ATP5MG/subunit g, ATP5MK/subunit k, ATP5MJ/subunit j, ATP5F1C/subunit gamma, ATP5F1D/subunit delta, ATP5F1E/subunit epsilon, ATP5PF/subunit F6, ATP5PB/subunit b, ATP5PD/subunit d, ATP5PO/subunit OSCP. ATP synthase complex consists of a soluble F(1) head domain (subunits alpha(3) and beta(3)) - the catalytic core - and a membrane F(0) domain - the membrane proton channel (subunits c, a, 8, e, f, g, k and j). These two domains are linked by a central stalk (subunits gamma, delta, and epsilon) rotating inside the F1 region and a stationary peripheral stalk (subunits F6, b, d, and OSCP).

It is found in the mitochondrion membrane. Subunit 8, of the mitochondrial membrane ATP synthase complex (F(1)F(0) ATP synthase or Complex V) that produces ATP from ADP in the presence of a proton gradient across the membrane which is generated by electron transport complexes of the respiratory chain. ATP synthase complex consist of a soluble F(1) head domain - the catalytic core - and a membrane F(1) domain - the membrane proton channel. These two domains are linked by a central stalk rotating inside the F(1) region and a stationary peripheral stalk. During catalysis, ATP synthesis in the catalytic domain of F(1) is coupled via a rotary mechanism of the central stalk subunits to proton translocation. In vivo, can only synthesize ATP although its ATP hydrolase activity can be activated artificially in vitro. Part of the complex F(0) domain. The chain is ATP synthase F(0) complex subunit 8 from Musophaga violacea (Violet turaco).